A 485-amino-acid polypeptide reads, in one-letter code: UDP-N-acetylmuramoyl-L-alanyl-D-glutamate--2,6-diaminopimelate ligase (485 aa).

Serine 32 contacts UDP-N-acetyl-alpha-D-muramoyl-L-alanyl-D-glutamate. 111 to 117 (GTNGKTT) provides a ligand contact to ATP. UDP-N-acetyl-alpha-D-muramoyl-L-alanyl-D-glutamate contacts are provided by residues 153-154 (TT), serine 180, and arginine 188. At lysine 220 the chain carries N6-carboxylysine. Residues arginine 382, 405–408 (DNPR), glycine 455, and glutamate 459 contribute to the meso-2,6-diaminopimelate site. Residues 405-408 (DNPR) carry the Meso-diaminopimelate recognition motif motif.

Belongs to the MurCDEF family. MurE subfamily. It depends on Mg(2+) as a cofactor. Post-translationally, carboxylation is probably crucial for Mg(2+) binding and, consequently, for the gamma-phosphate positioning of ATP.

It is found in the cytoplasm. It carries out the reaction UDP-N-acetyl-alpha-D-muramoyl-L-alanyl-D-glutamate + meso-2,6-diaminopimelate + ATP = UDP-N-acetyl-alpha-D-muramoyl-L-alanyl-gamma-D-glutamyl-meso-2,6-diaminopimelate + ADP + phosphate + H(+). Its pathway is cell wall biogenesis; peptidoglycan biosynthesis. In terms of biological role, catalyzes the addition of meso-diaminopimelic acid to the nucleotide precursor UDP-N-acetylmuramoyl-L-alanyl-D-glutamate (UMAG) in the biosynthesis of bacterial cell-wall peptidoglycan. The protein is UDP-N-acetylmuramoyl-L-alanyl-D-glutamate--2,6-diaminopimelate ligase of Chlamydia felis (strain Fe/C-56) (Chlamydophila felis).